We begin with the raw amino-acid sequence, 130 residues long: S-adenosylmethionine decarboxylase proenzyme (130 aa).

Catalysis depends on S63, which acts as the Schiff-base intermediate with substrate; via pyruvic acid. S63 is modified (pyruvic acid (Ser); by autocatalysis). H68 acts as the Proton acceptor; for processing activity in catalysis. Catalysis depends on C83, which acts as the Proton donor; for catalytic activity.

This sequence belongs to the prokaryotic AdoMetDC family. Type 1 subfamily. In terms of assembly, heterotetramer of two alpha and two beta chains arranged as a dimer of alpha/beta heterodimers. Requires pyruvate as cofactor. Post-translationally, is synthesized initially as an inactive proenzyme. Formation of the active enzyme involves a self-maturation process in which the active site pyruvoyl group is generated from an internal serine residue via an autocatalytic post-translational modification. Two non-identical subunits are generated from the proenzyme in this reaction, and the pyruvate is formed at the N-terminus of the alpha chain, which is derived from the carboxyl end of the proenzyme. The post-translation cleavage follows an unusual pathway, termed non-hydrolytic serinolysis, in which the side chain hydroxyl group of the serine supplies its oxygen atom to form the C-terminus of the beta chain, while the remainder of the serine residue undergoes an oxidative deamination to produce ammonia and the pyruvoyl group blocking the N-terminus of the alpha chain.

It carries out the reaction S-adenosyl-L-methionine + H(+) = S-adenosyl 3-(methylsulfanyl)propylamine + CO2. It functions in the pathway amine and polyamine biosynthesis; S-adenosylmethioninamine biosynthesis; S-adenosylmethioninamine from S-adenosyl-L-methionine: step 1/1. In terms of biological role, catalyzes the decarboxylation of S-adenosylmethionine to S-adenosylmethioninamine (dcAdoMet), the propylamine donor required for the synthesis of the polyamines spermine and spermidine from the diamine putrescine. This Thermosipho melanesiensis (strain DSM 12029 / CIP 104789 / BI429) protein is S-adenosylmethionine decarboxylase proenzyme.